The chain runs to 975 residues: C-1-tetrahydrofolate synthase, mitochondrial (975 aa).

The N-terminal 34 residues, 1–34, are a transit peptide targeting the mitochondrion; it reads MLSRLSLLSNSRAFQQARWRIYRLKVSPTVHASQ. Residues 35 to 343 form a methylenetetrahydrofolate dehydrogenase and cyclohydrolase region; that stretch reads YHILSGRKLA…KPLPLHLESP (309 aa). Residues 83-87 and 130-132 each bind substrate; these read YVRMK and IQL. NADP(+) contacts are provided by residues 201–203 and S226; that span reads GRS. Substrate is bound at residue 301–305; that stretch reads PGGVG. A formyltetrahydrofolate synthetase region spans residues 344-975; sequence VPSDIDISRA…DDDGEIEGLF (632 aa). Residue 408–415 coordinates ATP; the sequence is TPLGEGKS.

This sequence in the N-terminal section; belongs to the tetrahydrofolate dehydrogenase/cyclohydrolase family. It in the C-terminal section; belongs to the formate--tetrahydrofolate ligase family. As to quaternary structure, homodimer.

It is found in the mitochondrion. The catalysed reaction is (6R)-5,10-methylene-5,6,7,8-tetrahydrofolate + NADP(+) = (6R)-5,10-methenyltetrahydrofolate + NADPH. It catalyses the reaction (6R)-5,10-methenyltetrahydrofolate + H2O = (6R)-10-formyltetrahydrofolate + H(+). The enzyme catalyses (6S)-5,6,7,8-tetrahydrofolate + formate + ATP = (6R)-10-formyltetrahydrofolate + ADP + phosphate. It functions in the pathway one-carbon metabolism; tetrahydrofolate interconversion. Mitochondrial isozyme of C-1-tetrahydrofolate synthase. The trifunctional enzyme catalyzes the interconversion of the one-carbon derivatives of tetrahydrofolate (THF) between different oxidation states by the enzymatic activities 10-formyltetrahydrofolate synthetase, 5,lO-methenyltetrahydrofolate cyclohydrolase, and 5,lO-methylenetetrahydrofolate dehydrogenase. The sequence is that of C-1-tetrahydrofolate synthase, mitochondrial from Saccharomyces cerevisiae (strain ATCC 204508 / S288c) (Baker's yeast).